The chain runs to 57 residues: Large ribosomal subunit protein bL32 (57 aa).

The segment covering 1 to 19 has biased composition (basic residues); that stretch reads MATPKRRMSRANTRSRRSQ. The segment at 1-20 is disordered; the sequence is MATPKRRMSRANTRSRRSQW.

The protein belongs to the bacterial ribosomal protein bL32 family.

In Mycobacterium marinum (strain ATCC BAA-535 / M), this protein is Large ribosomal subunit protein bL32.